The following is a 358-amino-acid chain: Variant-surface-glycoprotein phospholipase C (358 aa).

The region spanning 25–198 (IGQVYMVGAH…STRRIFLVVR (174 aa)) is the PI-PLC X-box domain.

Monomer. Post-translationally, the N-terminus is blocked.

The protein resides in the membrane. It carries out the reaction a 6-(alpha-D-glucosaminyl)-1-(1,2-diacyl-sn-glycero-3-phospho)-1D-myo-inositol = 6-(alpha-D-glucosaminyl)-1D-myo-inositol 1,2-cyclic phosphate + a 1,2-diacyl-sn-glycerol. Its function is as follows. By hydrolysis of the attached glycolipid, releases soluble variant surface glycoprotein containing phosphoinositol from the cell wall of T.brucei after cell lysis. It also cleaves similar membrane anchors on some mammalian proteins. VSG lipase may play a role in processes such as parasite differentiation or antigenic variation. This chain is Variant-surface-glycoprotein phospholipase C, found in Trypanosoma brucei brucei.